The primary structure comprises 788 residues: Protein translocase subunit SecA (788 aa).

ATP contacts are provided by residues Gln85, 103 to 107 (GEGKT), and Asp494.

It belongs to the SecA family. In terms of assembly, monomer and homodimer. Part of the essential Sec protein translocation apparatus which comprises SecA, SecYEG and auxiliary proteins SecDF. Other proteins may also be involved.

It is found in the cell membrane. Its subcellular location is the cytoplasm. It catalyses the reaction ATP + H2O + cellular proteinSide 1 = ADP + phosphate + cellular proteinSide 2.. Its function is as follows. Part of the Sec protein translocase complex. Interacts with the SecYEG preprotein conducting channel. Has a central role in coupling the hydrolysis of ATP to the transfer of proteins into and across the cell membrane, serving as an ATP-driven molecular motor driving the stepwise translocation of polypeptide chains across the membrane. This is Protein translocase subunit SecA from Oenococcus oeni (strain ATCC BAA-331 / PSU-1).